Reading from the N-terminus, the 843-residue chain is Speckle targeted PIP5K1A-regulated poly(A) polymerase (843 aa).

Residues 25-55 form a Matrin-type zinc finger; sequence FRCLLCGVNIPNRPSLTDHLSGRRHVRLHEE. Positions 54 to 126 constitute an RRM domain; that stretch reads EERDKRNQQQ…ALEEPQIKLS (73 aa). The span at 134–146 shows a compositional bias: basic residues; that stretch reads PREKKEFQRKKGG. A disordered region spans residues 134–157; sequence PREKKEFQRKKGGSPRTLQPPDPE. Ser-215 contributes to the ATP binding site. Positions 226 and 228 each coordinate Mg(2+). Positions 226 and 228 each coordinate UTP. Residues 241-255 show a composition bias toward basic and acidic residues; the sequence is VEGKAEKEIQNREES. The segment at 241-292 is disordered; it reads VEGKAEKEIQNREESSTDMEVSMEDPETERKEEEMEIGNSKNDEDEDVTPGL. An ATP-binding site is contributed by Asn-354. Asn-354, Arg-376, Tyr-398, and His-516 together coordinate UTP. One can recognise a PAP-associated domain in the interval 456-516; that stretch reads SLSSLLSEFF…NIQDPFELSH (61 aa). Residues 564 to 837 are KA1; binds the bulging loops of U6 snRNA but is dispensable for terminal uridylyltransferase activity; the sequence is PPTERECVGR…YLPRMVAQIQ (274 aa). Residues 653 to 691 form a disordered region; the sequence is QNNTKEASKQKSIFKTEEGMTESARRKREMTEPCMSDMT. Basic and acidic residues predominate over residues 658-670; sequence EASKQKSIFKTEE.

The protein belongs to the DNA polymerase type-B-like family. As to quaternary structure, associates with the cleavage and polyadenylation specificity factor (CPSF) complex. Mg(2+) is required as a cofactor. It depends on Mn(2+) as a cofactor.

It localises to the nucleus. Its subcellular location is the nucleolus. The protein resides in the nucleus speckle. The enzyme catalyses RNA(n) + UTP = RNA(n)-3'-uridine ribonucleotide + diphosphate. It catalyses the reaction RNA(n) + ATP = RNA(n)-3'-adenine ribonucleotide + diphosphate. In terms of biological role, poly(A) polymerase that creates the 3'-poly(A) tail of specific pre-mRNAs. In addition to polyadenylation, it is also required for the 3'-end cleavage of pre-mRNAs: binds to the 3'UTR of targeted pre-mRNAs and promotes the recruitment and assembly of the CPSF complex on the 3'UTR of pre-mRNAs. In addition to adenylyltransferase activity, also has uridylyltransferase activity. However, the ATP ratio is higher than UTP in cells, suggesting that it functions primarily as a poly(A) polymerase. This chain is Speckle targeted PIP5K1A-regulated poly(A) polymerase (tut1), found in Xenopus tropicalis (Western clawed frog).